Reading from the N-terminus, the 59-residue chain is Small ribosomal subunit protein bS21 (59 aa).

The tract at residues 34-59 is disordered; sequence KHEHYEKPSVKRKKKSEAARRRKRSF. Residues 43 to 59 show a composition bias toward basic residues; sequence VKRKKKSEAARRRKRSF.

The protein belongs to the bacterial ribosomal protein bS21 family.

This Desulforudis audaxviator (strain MP104C) protein is Small ribosomal subunit protein bS21.